We begin with the raw amino-acid sequence, 204 residues long: Putative glutathione S-transferase alpha-3 (204 aa).

Position 2 is an N-acetylthreonine (threonine 2). Positions 2–79 (TKPQLSYFKV…YIASQHDFVG (78 aa)) constitute a GST N-terminal domain. Glutathione contacts are provided by residues tyrosine 8, 49–50 (QL), and 63–64 (QS). A GST C-terminal domain is found at 81–202 (TPEEKALVDE…YLKNRPITER (122 aa)).

It belongs to the GST superfamily. Alpha family.

It catalyses the reaction RX + glutathione = an S-substituted glutathione + a halide anion + H(+). Conjugation of reduced glutathione to a wide number of exogenous and endogenous hydrophobic electrophiles. This chain is Putative glutathione S-transferase alpha-3 (gsta3), found in Dictyostelium discoideum (Social amoeba).